The sequence spans 323 residues: Germination protease (323 aa).

A propeptide spanning residues 1-6 is cleaved from the precursor; that stretch reads MSVRTD.

It belongs to the peptidase A25 family. Homotetramer. Post-translationally, autoproteolytically processed. The inactive tetrameric zymogen termed p46 autoprocesses to a smaller form termed p41, which is active only during spore germination.

The catalysed reaction is Endopeptidase action with P4 Glu or Asp, P1 preferably Glu &gt; Asp, P1' hydrophobic and P2' Ala.. Initiates the rapid degradation of small, acid-soluble proteins during spore germination. This Clostridium tetani (strain Massachusetts / E88) protein is Germination protease.